The following is a 174-amino-acid chain: RNA pyrophosphohydrolase (174 aa).

Positions 6-149 (GYRPNVGIVI…KRDVYRRALK (144 aa)) constitute a Nudix hydrolase domain. Positions 38–59 (GGIDEGETPEQAMYRELYEEVG) match the Nudix box motif.

Belongs to the Nudix hydrolase family. RppH subfamily. It depends on a divalent metal cation as a cofactor.

Accelerates the degradation of transcripts by removing pyrophosphate from the 5'-end of triphosphorylated RNA, leading to a more labile monophosphorylated state that can stimulate subsequent ribonuclease cleavage. This Photobacterium profundum (strain SS9) protein is RNA pyrophosphohydrolase.